We begin with the raw amino-acid sequence, 206 residues long: Threonine efflux protein (206 aa).

The chain crosses the membrane as a helical span at residues 1–21 (MLMLFLTVAMVHIVALMSPGP). Topologically, residues 22–43 (DFFFVSQTAVSRSRKEAMMGVL) are periplasmic. The helical transmembrane segment at 44-64 (GITCGVMVWAGIALLGLHLII) threads the bilayer. The Cytoplasmic portion of the chain corresponds to 65 to 66 (EK). A helical membrane pass occupies residues 67–87 (MAWLHTLIMVGGGLYLCWMGY). At 88–149 (QMLRGALKKE…VGDNVGTTAR (62 aa)) the chain is on the periplasmic side. The helical transmembrane segment at 150–173 (WGIFALIIVETLAWFTVVASLFAL) threads the bilayer. Topologically, residues 174-206 (PQMRRGYQRLAKWIDGFAGALFAGFGIHLIISR) are cytoplasmic.

Belongs to the Rht family.

Its subcellular location is the cell inner membrane. Its function is as follows. Conducts the efflux of threonine. This chain is Threonine efflux protein (rhtC), found in Escherichia coli O157:H7.